The chain runs to 67 residues: Small ribosomal subunit protein eS17 (67 aa).

The protein belongs to the eukaryotic ribosomal protein eS17 family.

This chain is Small ribosomal subunit protein eS17, found in Thermococcus onnurineus (strain NA1).